We begin with the raw amino-acid sequence, 275 residues long: Fos-related antigen 1 (275 aa).

2 disordered regions span residues 1–33 and 71–115; these read MYRDFGEPGPSSGAGSAYGRPAQPQQAQTQTVQ and TYPQ…VRRE. The segment covering 7–33 has biased composition (low complexity); that stretch reads EPGPSSGAGSAYGRPAQPQQAQTQTVQ. In terms of domain architecture, bZIP spans 107–170; the sequence is EERRRVRRER…ERLELVLEAH (64 aa). The interval 109–129 is basic motif; sequence RRRVRRERNKLAAAKCRNRRK. The tract at residues 135 to 163 is leucine-zipper; sequence LQAETDKLEDEKSGLQREIEELQKQKERL. The segment covering 171 to 184 has biased composition (basic and acidic residues); the sequence is RPICKIPEEDKKDT. The interval 171 to 275 is disordered; that stretch reads RPICKIPEED…PLGSPTLLAL (105 aa). 3 stretches are compositionally biased toward low complexity: residues 185 to 194, 219 to 237, and 256 to 275; these read GGTSSTSGAG, LHTPTLMTTPSLTPFTPSL, and SSSSGDPSSDPLGSPTLLAL. S269 carries the post-translational modification Phosphoserine.

The protein belongs to the bZIP family. Fos subfamily. In terms of assembly, heterodimer. Interacts with the BAF multiprotein chromatin-remodeling complex subunits SMARCB1 and SMARCD1. Interacts with ARID1A and JUN.

It localises to the nucleus. The polypeptide is Fos-related antigen 1 (Fosl1) (Rattus norvegicus (Rat)).